The sequence spans 1289 residues: Outer capsid protein lambda-2 (1289 aa).

893–900 is an ATP binding site; sequence GAAAAGKS.

Belongs to the orthoreovirus lambda-2 protein family. In terms of assembly, interacts with protein mu-NS; in viral inclusions.

It localises to the virion. It catalyses the reaction a 5'-end diphospho-ribonucleoside in mRNA + GTP + H(+) = a 5'-end (5'-triphosphoguanosine)-ribonucleoside in mRNA + diphosphate. The enzyme catalyses a 5'-end (5'-triphosphoguanosine)-ribonucleoside in mRNA + S-adenosyl-L-methionine = a 5'-end (N(7)-methyl 5'-triphosphoguanosine)-ribonucleoside in mRNA + S-adenosyl-L-homocysteine. Functionally, outer capsid protein involved in mRNA capping. Catalyzes the last 3 enzymatic activities for formation of the 5' cap structure on the viral plus-strand transcripts, namely the RNA guanylyltransferase, RNA-7N- and RNA-2'O-methyltransferase activities. The sequence is that of Outer capsid protein lambda-2 (L2) from Reovirus type 1 (strain Lang) (T1L).